A 341-amino-acid chain; its full sequence is N-acetyl-gamma-glutamyl-phosphate reductase (341 aa).

Residue Cys145 is part of the active site.

Belongs to the NAGSA dehydrogenase family. Type 1 subfamily.

It is found in the cytoplasm. The enzyme catalyses N-acetyl-L-glutamate 5-semialdehyde + phosphate + NADP(+) = N-acetyl-L-glutamyl 5-phosphate + NADPH + H(+). The protein operates within amino-acid biosynthesis; L-arginine biosynthesis; N(2)-acetyl-L-ornithine from L-glutamate: step 3/4. In terms of biological role, catalyzes the NADPH-dependent reduction of N-acetyl-5-glutamyl phosphate to yield N-acetyl-L-glutamate 5-semialdehyde. The polypeptide is N-acetyl-gamma-glutamyl-phosphate reductase (Streptomyces clavuligerus).